Reading from the N-terminus, the 291-residue chain is Putative heme-binding peroxidase (291 aa).

The active-site Proton acceptor is the histidine 61. Histidine 185 is a binding site for heme b. Tryptophan 201 acts as the Tryptophan radical intermediate in catalysis.

Belongs to the peroxidase family. Cytochrome c peroxidase subfamily. The cofactor is heme b.

Destroys radicals which are normally produced within the cells and which are toxic to biological systems. This chain is Putative heme-binding peroxidase (CCP2), found in Candida albicans (strain SC5314 / ATCC MYA-2876) (Yeast).